Here is a 216-residue protein sequence, read N- to C-terminus: Thiopurine S-methyltransferase (216 aa).

The S-adenosyl-L-methionine site is built by Trp11, Leu46, Glu67, and Arg122.

Belongs to the class I-like SAM-binding methyltransferase superfamily. TPMT family.

It is found in the cytoplasm. It carries out the reaction S-adenosyl-L-methionine + a thiopurine = S-adenosyl-L-homocysteine + a thiopurine S-methylether.. The sequence is that of Thiopurine S-methyltransferase from Vibrio campbellii (strain ATCC BAA-1116).